A 1279-amino-acid chain; its full sequence is Talin-A (1279 aa).

The FERM domain maps to 84 to 365 (RPQKFKLLDG…GYIEIIMKAR (282 aa)).

Its subcellular location is the cytoplasm. It is found in the cytoskeleton. The protein localises to the cell cortex. In terms of biological role, actin-binding protein that may be involved in the control of cell motility and chemotaxis. The sequence is that of Talin-A (talA) from Dictyostelium discoideum (Social amoeba).